The following is a 199-amino-acid chain: Recombination protein RecR (199 aa).

The C4-type zinc finger occupies 58-73 (CSRCFYFTEEDPCPLC). Residues 81 to 176 (QLICVVEEPQ…KVTRLAHGIP (96 aa)) enclose the Toprim domain.

It belongs to the RecR family.

Functionally, may play a role in DNA repair. It seems to be involved in an RecBC-independent recombinational process of DNA repair. It may act with RecF and RecO. This chain is Recombination protein RecR, found in Syntrophotalea carbinolica (strain DSM 2380 / NBRC 103641 / GraBd1) (Pelobacter carbinolicus).